Here is a 443-residue protein sequence, read N- to C-terminus: tRNA(Ile2) 2-agmatinylcytidine synthetase TiaS (443 aa).

The protein belongs to the TiaS family.

Its subcellular location is the cytoplasm. The catalysed reaction is cytidine(34) in tRNA(Ile2) + agmatine + ATP + H2O = 2-agmatinylcytidine(34) in tRNA(Ile2) + AMP + 2 phosphate + 2 H(+). ATP-dependent agmatine transferase that catalyzes the formation of 2-agmatinylcytidine (agm2C) at the wobble position (C34) of tRNA(Ile2), converting the codon specificity from AUG to AUA. The protein is tRNA(Ile2) 2-agmatinylcytidine synthetase TiaS of Saccharolobus islandicus (strain L.S.2.15 / Lassen #1) (Sulfolobus islandicus).